Here is a 626-residue protein sequence, read N- to C-terminus: DEAD-box ATP-dependent RNA helicase 16 (626 aa).

The disordered stretch occupies residues 1 to 48 (MGKTKLKPVEDVNSEVVDEVEKAEEVEEQRNDREQEEEQKEEEAPKSF). A coiled-coil region spans residues 9–47 (VEDVNSEVVDEVEKAEEVEEQRNDREQEEEQKEEEAPKS). The segment covering 12-27 (VNSEVVDEVEKAEEVE) has biased composition (acidic residues). The short motif at 46-74 (KSFEELGLDSRLIRALTKKGIEKPTLIQQ) is the Q motif element. Residues 77–259 (IPYILEGKDV…KLILHNPIVL (183 aa)) form the Helicase ATP-binding domain. Position 90–97 (90–97 (AKTGSGKT)) interacts with ATP. The DEAD box signature appears at 207–210 (DEAD). The Helicase C-terminal domain occupies 293-477 (ALLKLEVVQK…PFPLLTENAV (185 aa)). A coiled-coil region spans residues 356–385 (IATDDNSQTKKQKEEAKGEANKENKKNNKR). Basic and acidic residues predominate over residues 363–381 (QTKKQKEEAKGEANKENKK). Disordered regions lie at residues 363–388 (QTKK…RSKP) and 568–626 (AMGN…QKTV).

The protein belongs to the DEAD box helicase family. DDX56/DBP9 subfamily.

It carries out the reaction ATP + H2O = ADP + phosphate + H(+). This is DEAD-box ATP-dependent RNA helicase 16 (RH16) from Arabidopsis thaliana (Mouse-ear cress).